Here is a 537-residue protein sequence, read N- to C-terminus: Woronin body major protein hexA (537 aa).

3 stretches are compositionally biased toward basic and acidic residues: residues 1 to 17 (MYSVESKFERDSRRDAQ), 59 to 70 (DRTSHVEREDTR), and 116 to 134 (DSRVPEVELSRERWKRSEN). Disordered stretches follow at residues 1-20 (MYSVESKFERDSRRDAQRTA), 59-79 (DRTSHVEREDTRTSAPLPDPR), 116-200 (DSRV…KPVY), and 269-295 (PKPLETRKGDSFSRSELTVESVPSRPS). Residues 135–144 (NAKQNKNKNN) show a composition bias toward low complexity. Over residues 272–281 (LETRKGDSFS) the composition is skewed to basic and acidic residues.

The protein belongs to the eIF-5A family. Hex1 subfamily. In terms of assembly, forms oligomers. Self-assembles into hexagonal rods. Binds directly or indirectly to the Woronin body tether lah.

It is found in the cell septum. Its subcellular location is the cytoplasm. Its function is as follows. Major component of Woronin bodies, fungal-specific organelles that occlude septal pores in order to separate intact from damaged compartments. HexA binds directly or indirectly to the Woronin body tether that in turn is anchored at the rim of the septal pore. Woronin bodies are important for stress resistance and virulence. The sequence is that of Woronin body major protein hexA from Aspergillus fumigatus (strain ATCC MYA-4609 / CBS 101355 / FGSC A1100 / Af293) (Neosartorya fumigata).